Consider the following 317-residue polypeptide: Retinol dehydrogenase 16 (317 aa).

33–57 (FITGCDSGFGKLLARQLDARGLRVL) lines the NAD(+) pocket. Position 164 (serine 164) interacts with substrate. The active-site Proton acceptor is tyrosine 176. A helical transmembrane segment spans residues 289 to 309 (LLYLPMSYMPTFLVDAIMYWV).

It belongs to the short-chain dehydrogenases/reductases (SDR) family. Homodimer. Not N-glycosylated. As to expression, highly expressed in adult liver (at protein level). Detected in endometrium, liver and foreskin. Detected in the spineous layers of adult skin, and at lower levels in basal and granular skin layers. Detected in fetal liver and lung.

Its subcellular location is the microsome membrane. The protein localises to the endoplasmic reticulum membrane. The catalysed reaction is all-trans-retinol--[retinol-binding protein] + NAD(+) = all-trans-retinal--[retinol-binding protein] + NADH + H(+). It catalyses the reaction all-trans-retinol + NAD(+) = all-trans-retinal + NADH + H(+). It carries out the reaction 13-cis-retinol + NAD(+) = 13-cis-retinal + NADH + H(+). The enzyme catalyses 11-cis-retinol + NAD(+) = 11-cis-retinal + NADH + H(+). The catalysed reaction is 9-cis-retinol + NAD(+) = 9-cis-retinal + NADH + H(+). It catalyses the reaction 5alpha-androstane-3alpha,17beta-diol + NAD(+) = 17beta-hydroxy-5alpha-androstan-3-one + NADH + H(+). It carries out the reaction androsterone + NAD(+) = 5alpha-androstan-3,17-dione + NADH + H(+). It participates in cofactor metabolism; retinol metabolism. With respect to regulation, inhibited by citral, perillyl alcohol, geraniol, farnesol and geranyl geraniol. Functionally, oxidoreductase with a preference for NAD. Oxidizes all-trans-retinol, 9-cis-retinol, 11-cis-retinol and 13-cis-retinol to the corresponding aldehydes. Has higher activity towards CRBP-bound retinol than with free retinol. Also oxidizes 3-alpha-hydroxysteroids. Oxidizes androstanediol and androsterone to dihydrotestosterone and androstanedione. Can also catalyze the reverse reaction. This is Retinol dehydrogenase 16 from Homo sapiens (Human).